Here is a 603-residue protein sequence, read N- to C-terminus: Elongation factor 4 (603 aa).

The tr-type G domain maps to 7-189 (VRIRNFCIIA…AVVERIPPPP (183 aa)). GTP-binding positions include 19-24 (DHGKST) and 136-139 (NKID).

This sequence belongs to the TRAFAC class translation factor GTPase superfamily. Classic translation factor GTPase family. LepA subfamily.

Its subcellular location is the cell inner membrane. It catalyses the reaction GTP + H2O = GDP + phosphate + H(+). Required for accurate and efficient protein synthesis under certain stress conditions. May act as a fidelity factor of the translation reaction, by catalyzing a one-codon backward translocation of tRNAs on improperly translocated ribosomes. Back-translocation proceeds from a post-translocation (POST) complex to a pre-translocation (PRE) complex, thus giving elongation factor G a second chance to translocate the tRNAs correctly. Binds to ribosomes in a GTP-dependent manner. The sequence is that of Elongation factor 4 from Trichormus variabilis (strain ATCC 29413 / PCC 7937) (Anabaena variabilis).